A 138-amino-acid chain; its full sequence is Basic phospholipase A2 RV-4 (138 aa).

The N-terminal stretch at 1–16 (MRTLWIVAVCLIGVEG) is a signal peptide. Cystine bridges form between Cys42–Cys131, Cys44–Cys60, Cys59–Cys111, Cys65–Cys138, Cys66–Cys104, Cys73–Cys97, and Cys91–Cys102. The Ca(2+) site is built by Tyr43, Gly45, and Gly47. His63 is a catalytic residue. Asp64 provides a ligand contact to Ca(2+). Asp105 is an active-site residue.

This sequence belongs to the phospholipase A2 family. Group II subfamily. D49 sub-subfamily. As to quaternary structure, heterodimer of a weakly toxic basic protein having phospholipase A2 activity (RV-4) and a non-toxic acidic protein which inhibits its enzymatic activity but potentiates its lethal potency and neurotoxicity (RV-7). It depends on Ca(2+) as a cofactor. As to expression, expressed by the venom gland.

The protein localises to the secreted. The catalysed reaction is a 1,2-diacyl-sn-glycero-3-phosphocholine + H2O = a 1-acyl-sn-glycero-3-phosphocholine + a fatty acid + H(+). In terms of biological role, heterodimer RV-4/RV-7: acts as a presynaptic neurotoxin. Monomer: snake venom phospholipase A2 (PLA2) that acts as a presynaptic neurotoxin. PLA2 catalyzes the calcium-dependent hydrolysis of the 2-acyl groups in 3-sn-phosphoglycerides. The chain is Basic phospholipase A2 RV-4 from Daboia siamensis (Eastern Russel's viper).